Here is a 145-residue protein sequence, read N- to C-terminus: Deoxyuridine 5'-triphosphate nucleotidohydrolase (145 aa).

Substrate is bound by residues 63 to 65, Gln-76, and 80 to 82; these read RSG and TVD.

This sequence belongs to the dUTPase family. The cofactor is Mg(2+).

The enzyme catalyses dUTP + H2O = dUMP + diphosphate + H(+). It participates in pyrimidine metabolism; dUMP biosynthesis; dUMP from dCTP (dUTP route): step 2/2. This enzyme is involved in nucleotide metabolism: it produces dUMP, the immediate precursor of thymidine nucleotides and it decreases the intracellular concentration of dUTP so that uracil cannot be incorporated into DNA. This Chlamydia muridarum (strain MoPn / Nigg) protein is Deoxyuridine 5'-triphosphate nucleotidohydrolase.